Consider the following 81-residue polypeptide: Toxin F-VIII (81 aa).

Residues 1 to 21 (MKTLLLTLLVVTIVCLDLAST) form the signal peptide. 4 cysteine pairs are disulfide-bonded: C24/C43, C38/C60, C62/C73, and C74/C79.

This sequence belongs to the three-finger toxin family. Short-chain subfamily. Orphan group XI sub-subfamily. As to expression, expressed by the venom gland.

Its subcellular location is the secreted. Functionally, is cytotoxic against A549 cells (LC(50)=106 ug/ml). The protein is Toxin F-VIII of Dendroaspis angusticeps (Eastern green mamba).